We begin with the raw amino-acid sequence, 357 residues long: Phosphoribosylformylglycinamidine cyclo-ligase (357 aa).

It belongs to the AIR synthase family.

The protein localises to the cytoplasm. It carries out the reaction 2-formamido-N(1)-(5-O-phospho-beta-D-ribosyl)acetamidine + ATP = 5-amino-1-(5-phospho-beta-D-ribosyl)imidazole + ADP + phosphate + H(+). The protein operates within purine metabolism; IMP biosynthesis via de novo pathway; 5-amino-1-(5-phospho-D-ribosyl)imidazole from N(2)-formyl-N(1)-(5-phospho-D-ribosyl)glycinamide: step 2/2. This is Phosphoribosylformylglycinamidine cyclo-ligase from Rhizobium johnstonii (strain DSM 114642 / LMG 32736 / 3841) (Rhizobium leguminosarum bv. viciae).